The chain runs to 802 residues: Protein SBE22 (802 aa).

Disordered regions lie at residues 207 to 230 and 323 to 345; these read SSTINANNMKSTGTLPPFRPRSNS and SGDPKHVRSHQSKPQPRFPQRHN.

It belongs to the SBE2 family.

It localises to the cytoplasm. It is found in the golgi apparatus. With SBE2, is involved in cell wall integrity and polarity processes like bud growth. In Vanderwaltozyma polyspora (strain ATCC 22028 / DSM 70294 / BCRC 21397 / CBS 2163 / NBRC 10782 / NRRL Y-8283 / UCD 57-17) (Kluyveromyces polysporus), this protein is Protein SBE22 (SBE22).